The sequence spans 977 residues: Glycine dehydrogenase (decarboxylating) (977 aa).

The residue at position 702 (Lys-702) is an N6-(pyridoxal phosphate)lysine.

Belongs to the GcvP family. In terms of assembly, the glycine cleavage system is composed of four proteins: P, T, L and H. Pyridoxal 5'-phosphate is required as a cofactor.

It catalyses the reaction N(6)-[(R)-lipoyl]-L-lysyl-[glycine-cleavage complex H protein] + glycine + H(+) = N(6)-[(R)-S(8)-aminomethyldihydrolipoyl]-L-lysyl-[glycine-cleavage complex H protein] + CO2. The glycine cleavage system catalyzes the degradation of glycine. The P protein binds the alpha-amino group of glycine through its pyridoxal phosphate cofactor; CO(2) is released and the remaining methylamine moiety is then transferred to the lipoamide cofactor of the H protein. The protein is Glycine dehydrogenase (decarboxylating) of Xanthomonas axonopodis pv. citri (strain 306).